An 87-amino-acid chain; its full sequence is Small ribosomal subunit protein uS17 (87 aa).

This sequence belongs to the universal ribosomal protein uS17 family. As to quaternary structure, part of the 30S ribosomal subunit.

In terms of biological role, one of the primary rRNA binding proteins, it binds specifically to the 5'-end of 16S ribosomal RNA. This is Small ribosomal subunit protein uS17 from Bacillus velezensis (strain DSM 23117 / BGSC 10A6 / LMG 26770 / FZB42) (Bacillus amyloliquefaciens subsp. plantarum).